The following is a 562-amino-acid chain: MENIRSFMSFPESRKVYIEGSRPDVRVPMREIALSPTKTPQGMVENKPVRVYDTTGPYTDPDFEPDVEKGLPPLRRRWIVERGDVEEMERSSVAIQRSLPFVRRPLRAKPGKTVTQMHYAKRGIITPEMEFVAIREQIDPEIVRQEVAAGRAIIPANINHPESEPMIIGRRFHVKINANIGNSAVSSSIEDEVEKLLWAVRWGADTVMDLSTGKHIHETREYIIRNSPVPVGTVPIYQALEKVGGVPEKLTWDVYRETLIEQAEQGVDYMTIHAGVRLHYIPLTANRTTGIVSRGGSIIAQWCLAHHEENFLYTHFEEICEILKQYDVAISLGDGLRPGSIADANDEAQFAELKTLGELTKIAWKHDVQVMIEGPGHIPMHKIRENVEREQEICHGAPFYTLGPLVTDIAPGYDHITSAIGAAIIGAYGTAMLCYVTPKEHLGLPNKEDVRAGVVAYKIAAHAADLAKGHPAAQQRDDALSKARFEFRWNDQFNLSLDPERAREYHDETLPAEAAKTAHFCSMCGPKFCSMNISHELQRKIKEEGMKEKAQQFIRQGSSLYQ.

Substrate is bound by residues N179, M208, Y237, H273, S293 to G295, D334 to R337, and E373. H377 is a Zn(2+) binding site. Y400 provides a ligand contact to substrate. Residue H441 coordinates Zn(2+). Residues C521, C524, and C529 each coordinate [4Fe-4S] cluster.

This sequence belongs to the ThiC family. [4Fe-4S] cluster serves as cofactor.

The enzyme catalyses 5-amino-1-(5-phospho-beta-D-ribosyl)imidazole + S-adenosyl-L-methionine = 4-amino-2-methyl-5-(phosphooxymethyl)pyrimidine + CO + 5'-deoxyadenosine + formate + L-methionine + 3 H(+). It participates in cofactor biosynthesis; thiamine diphosphate biosynthesis. In terms of biological role, catalyzes the synthesis of the hydroxymethylpyrimidine phosphate (HMP-P) moiety of thiamine from aminoimidazole ribotide (AIR) in a radical S-adenosyl-L-methionine (SAM)-dependent reaction. The protein is Phosphomethylpyrimidine synthase of Geobacillus kaustophilus (strain HTA426).